The primary structure comprises 220 residues: Phosphoenolpyruvate guanylyltransferase (220 aa).

Phosphoenolpyruvate is bound by residues threonine 154, glycine 169, and serine 172.

It belongs to the CofC family.

The enzyme catalyses phosphoenolpyruvate + GTP + H(+) = enolpyruvoyl-2-diphospho-5'-guanosine + diphosphate. The protein operates within cofactor biosynthesis; coenzyme F420 biosynthesis. In terms of biological role, guanylyltransferase that catalyzes the activation of phosphoenolpyruvate (PEP) as enolpyruvoyl-2-diphospho-5'-guanosine, via the condensation of PEP with GTP. It is involved in the biosynthesis of coenzyme F420, a hydride carrier cofactor. The polypeptide is Phosphoenolpyruvate guanylyltransferase (Mycolicibacterium paratuberculosis (strain ATCC BAA-968 / K-10) (Mycobacterium paratuberculosis)).